The primary structure comprises 202 residues: Adenylyl-sulfate kinase (202 aa).

31–38 (GLSASGKS) serves as a coordination point for ATP. Residue S105 is the Phosphoserine intermediate of the active site.

Belongs to the APS kinase family.

It carries out the reaction adenosine 5'-phosphosulfate + ATP = 3'-phosphoadenylyl sulfate + ADP + H(+). Its pathway is sulfur metabolism; hydrogen sulfide biosynthesis; sulfite from sulfate: step 2/3. Catalyzes the synthesis of activated sulfate. In Saccharomyces pastorianus (Lager yeast), this protein is Adenylyl-sulfate kinase (MET14).